A 360-amino-acid chain; its full sequence is 3-isopropylmalate dehydrogenase (360 aa).

Gly-76 to Glu-89 is an NAD(+) binding site. Positions 96, 106, 134, and 224 each coordinate substrate. Mg(2+) contacts are provided by Asp-224, Asp-248, and Asp-252. Gly-282–Asn-294 provides a ligand contact to NAD(+).

Belongs to the isocitrate and isopropylmalate dehydrogenases family. LeuB type 1 subfamily. Homodimer. Requires Mg(2+) as cofactor. Mn(2+) is required as a cofactor.

It is found in the cytoplasm. It carries out the reaction (2R,3S)-3-isopropylmalate + NAD(+) = 4-methyl-2-oxopentanoate + CO2 + NADH. Its pathway is amino-acid biosynthesis; L-leucine biosynthesis; L-leucine from 3-methyl-2-oxobutanoate: step 3/4. Functionally, catalyzes the oxidation of 3-carboxy-2-hydroxy-4-methylpentanoate (3-isopropylmalate) to 3-carboxy-4-methyl-2-oxopentanoate. The product decarboxylates to 4-methyl-2 oxopentanoate. In Pseudomonas syringae pv. syringae (strain B728a), this protein is 3-isopropylmalate dehydrogenase.